We begin with the raw amino-acid sequence, 181 residues long: MVEIFNYSTSIYEQHASNNRIVSDFRKEIQMEGISIRDVAKHAQILDMNPKPSALTSLLQTNQKSHWACFSPPNNFYKQRFSTPYLAPSLGSPDQQDEDIEKISSFLKVLTRGKFSYRSQITPFLSYKDKEEEEDEDPEEDDDDPRVQQGKVLLKALDLGVKSTNVMIDYVISRIFQFVQG.

A disordered region spans residues 126–148 (SYKDKEEEEDEDPEEDDDDPRVQ). Positions 131–144 (EEEEDEDPEEDDDD) are enriched in acidic residues.

Belongs to the chlamydial CPn_0422/CT_273/TC_0545 family.

This is an uncharacterized protein from Chlamydia pneumoniae (Chlamydophila pneumoniae).